The following is a 153-amino-acid chain: MNVIEGNLIGTGLRVAIVIARWNDFIGGNLLEGAVNTLKRHGVNDDDISVAWCPGSYEIPLVVKKIAERGQHDAIITLGAVIRGATSHYEVVVNAVSSGVTKVMHDTGIPVLLGVLTTDTIEQAIERAGTKAGNKGSECAVAAIEMANLLKQL.

Residues Trp-22, 56 to 58 (SYE), and 80 to 82 (AVI) contribute to the 5-amino-6-(D-ribitylamino)uracil site. 85-86 (AT) serves as a coordination point for (2S)-2-hydroxy-3-oxobutyl phosphate. His-88 (proton donor) is an active-site residue. A 5-amino-6-(D-ribitylamino)uracil-binding site is contributed by Leu-113. Arg-127 contacts (2S)-2-hydroxy-3-oxobutyl phosphate.

This sequence belongs to the DMRL synthase family.

The enzyme catalyses (2S)-2-hydroxy-3-oxobutyl phosphate + 5-amino-6-(D-ribitylamino)uracil = 6,7-dimethyl-8-(1-D-ribityl)lumazine + phosphate + 2 H2O + H(+). Its pathway is cofactor biosynthesis; riboflavin biosynthesis; riboflavin from 2-hydroxy-3-oxobutyl phosphate and 5-amino-6-(D-ribitylamino)uracil: step 1/2. Functionally, catalyzes the formation of 6,7-dimethyl-8-ribityllumazine by condensation of 5-amino-6-(D-ribitylamino)uracil with 3,4-dihydroxy-2-butanone 4-phosphate. This is the penultimate step in the biosynthesis of riboflavin. The sequence is that of 6,7-dimethyl-8-ribityllumazine synthase from Herpetosiphon aurantiacus (strain ATCC 23779 / DSM 785 / 114-95).